The sequence spans 568 residues: 2-succinyl-5-enolpyruvyl-6-hydroxy-3-cyclohexene-1-carboxylate synthase (568 aa).

The protein belongs to the TPP enzyme family. MenD subfamily. In terms of assembly, homodimer. Mg(2+) is required as a cofactor. Requires Mn(2+) as cofactor. Thiamine diphosphate serves as cofactor.

The catalysed reaction is isochorismate + 2-oxoglutarate + H(+) = 5-enolpyruvoyl-6-hydroxy-2-succinyl-cyclohex-3-ene-1-carboxylate + CO2. It participates in quinol/quinone metabolism; 1,4-dihydroxy-2-naphthoate biosynthesis; 1,4-dihydroxy-2-naphthoate from chorismate: step 2/7. The protein operates within quinol/quinone metabolism; menaquinone biosynthesis. Its function is as follows. Catalyzes the thiamine diphosphate-dependent decarboxylation of 2-oxoglutarate and the subsequent addition of the resulting succinic semialdehyde-thiamine pyrophosphate anion to isochorismate to yield 2-succinyl-5-enolpyruvyl-6-hydroxy-3-cyclohexene-1-carboxylate (SEPHCHC). The chain is 2-succinyl-5-enolpyruvyl-6-hydroxy-3-cyclohexene-1-carboxylate synthase from Actinobacillus succinogenes (strain ATCC 55618 / DSM 22257 / CCUG 43843 / 130Z).